A 374-amino-acid polypeptide reads, in one-letter code: UDP-N-acetylglucosamine--N-acetylmuramyl-(pentapeptide) pyrophosphoryl-undecaprenol N-acetylglucosamine transferase (374 aa).

Residues Thr-13–Gly-15, Asn-124, Arg-165, Ser-193, and Gln-294 contribute to the UDP-N-acetyl-alpha-D-glucosamine site.

The protein belongs to the glycosyltransferase 28 family. MurG subfamily.

The protein localises to the cell inner membrane. It catalyses the reaction di-trans,octa-cis-undecaprenyl diphospho-N-acetyl-alpha-D-muramoyl-L-alanyl-D-glutamyl-meso-2,6-diaminopimeloyl-D-alanyl-D-alanine + UDP-N-acetyl-alpha-D-glucosamine = di-trans,octa-cis-undecaprenyl diphospho-[N-acetyl-alpha-D-glucosaminyl-(1-&gt;4)]-N-acetyl-alpha-D-muramoyl-L-alanyl-D-glutamyl-meso-2,6-diaminopimeloyl-D-alanyl-D-alanine + UDP + H(+). It functions in the pathway cell wall biogenesis; peptidoglycan biosynthesis. Functionally, cell wall formation. Catalyzes the transfer of a GlcNAc subunit on undecaprenyl-pyrophosphoryl-MurNAc-pentapeptide (lipid intermediate I) to form undecaprenyl-pyrophosphoryl-MurNAc-(pentapeptide)GlcNAc (lipid intermediate II). This Rhizobium etli (strain CIAT 652) protein is UDP-N-acetylglucosamine--N-acetylmuramyl-(pentapeptide) pyrophosphoryl-undecaprenol N-acetylglucosamine transferase.